We begin with the raw amino-acid sequence, 179 residues long: Large ribosomal subunit protein uL6 (179 aa).

The protein belongs to the universal ribosomal protein uL6 family. As to quaternary structure, part of the 50S ribosomal subunit.

This protein binds to the 23S rRNA, and is important in its secondary structure. It is located near the subunit interface in the base of the L7/L12 stalk, and near the tRNA binding site of the peptidyltransferase center. In Pelodictyon phaeoclathratiforme (strain DSM 5477 / BU-1), this protein is Large ribosomal subunit protein uL6.